A 289-amino-acid chain; its full sequence is Paired box protein 5 homolog (289 aa).

The segment at residues 29–155 (SHTGVNQLGG…SSINRIVRNK (127 aa)) is a DNA-binding region (paired). Residues 32–88 (GVNQLGGVFVNGRPLADTVRAQIVEMSQHGTRPCDISRQLKVSHGCVSKILGRYYST) are PAI subdomain. The interval 107 to 155 (RVVECIAGYKRANPTMFAWEIRQKLIEDQICGEENVPSVSSINRIVRNK) is RED subdomain. 2 stretches are compositionally biased toward low complexity: residues 166-179 (SVTS…SATS) and 189-198 (VQQHMQQSTS). The segment at 166-198 (SVTSSAARPSSATSHHQRSPPRGVQQHMQQSTS) is disordered.

It localises to the nucleus. It is found in the chromosome. In terms of biological role, transcription factor. Binds to specific DNA sequence motifs in regulatory elements, for example in the genes encoding transcription factor lin-48, apoptosis regulator ced-9 and neuropeptide-like protein nlp-2. Specifies cell fate, playing an essential role in embryonic and larval development. Involved in morphogenesis of the vulva and uterus in hermaphrodites and of the rectal epithelium of the tail in males. Plays multiple roles in the development of the egg-laying system, acting in both lin-3/EGF-pathway-dependent and -independent processes. Positively regulates expression of neuropeptide-like proteins nlp-2 and nlp-7 in uvl cells in an EGF-pathway-dependent manner. Involved in negatively modulating apoptosis in germline and somatic cells, acting in partial redundancy with transcription factor pax-2, probably by directly regulating transcription of ced-9. Positively regulates transcription of lin-48 in hindgut cells and functions in the development of the hindgut. The sequence is that of Paired box protein 5 homolog from Caenorhabditis elegans.